The primary structure comprises 308 residues: Carbonic anhydrase 4 (308 aa).

Positions 1 to 18 (MQLLFALLALGALRPLAG) are cleaved as a signal peptide. The Alpha-carbonic anhydrase domain maps to 21–281 (LHWCYEIQAS…LGDRSVFKSQ (261 aa)). Intrachain disulfides connect cysteine 24/cysteine 34 and cysteine 44/cysteine 225. Residue asparagine 31 is glycosylated (N-linked (GlcNAc...) asparagine). The active-site Proton donor/acceptor is histidine 86. Zn(2+)-binding residues include histidine 113, histidine 115, and histidine 138. The N-linked (GlcNAc...) asparagine glycan is linked to asparagine 192. Residue 221–222 (TT) participates in substrate binding. The GPI-anchor amidated serine moiety is linked to residue serine 280. Positions 281 to 308 (QAAGQLLPLPLPTLLVPTLACVMAGLLR) are cleaved as a propeptide — removed in mature form.

Belongs to the alpha-carbonic anhydrase family. Interacts with SLC4A4. Zn(2+) serves as cofactor.

Its subcellular location is the cell membrane. It catalyses the reaction hydrogencarbonate + H(+) = CO2 + H2O. Inhibited by acetazolamide. Functionally, catalyzes the reversible hydration of carbon dioxide into bicarbonate and protons and thus is essential to maintaining intracellular and extracellular pH. May stimulate the sodium/bicarbonate transporter activity of SLC4A4 that acts in pH homeostasis. It is essential for acid overload removal from the retina and retina epithelium, and acid release in the choriocapillaris in the choroid. This Oryctolagus cuniculus (Rabbit) protein is Carbonic anhydrase 4 (CA4).